Here is a 499-residue protein sequence, read N- to C-terminus: MTTTLPAYDEVVARYEPVIGLETHVELGTNTKMFCGCPTDFGGAPNTRVCPVCLGLPGSLPVANRAAVEATIRIGLALNCSIAEWCRFARKNYYYPDMPKNYQISQYDEPLCVDGYLDVEVDGEPVRISIERVHMEEDTGKTLHVGGATGRIHGATESLVDYNRAGIPLVEIVTKPIPGAGAMAPEVARAYVTELRDVLRSLGVSDVRMEEGSLRCDVNTSLNLPGEQWGTRTETKNVNSLRSVERAVRSEMIRQASVLEGGGRITQETRHFHEDTGDTTSGRSKETATDYRYFPEPDLVPVAPDPTWVAELKAALPELPRLHRRRLQQEWGLSDLDMQSILNAGAVELIEATIAAGATPTAARKWWLGELSRRANEAGVELADIGATPEQVAELQGLVDAGKLTDKLARTVLEHVVAGEGSPAKIMADRNLEVVSDTGALTAAVDEAIAANPAIADKVRGGKVAAAGALVGAVMKTTRGQADAKTVRELILERLGVQG.

The protein belongs to the GatB/GatE family. GatB subfamily. Heterotrimer of A, B and C subunits.

The enzyme catalyses L-glutamyl-tRNA(Gln) + L-glutamine + ATP + H2O = L-glutaminyl-tRNA(Gln) + L-glutamate + ADP + phosphate + H(+). The catalysed reaction is L-aspartyl-tRNA(Asn) + L-glutamine + ATP + H2O = L-asparaginyl-tRNA(Asn) + L-glutamate + ADP + phosphate + 2 H(+). Its function is as follows. Allows the formation of correctly charged Asn-tRNA(Asn) or Gln-tRNA(Gln) through the transamidation of misacylated Asp-tRNA(Asn) or Glu-tRNA(Gln) in organisms which lack either or both of asparaginyl-tRNA or glutaminyl-tRNA synthetases. The reaction takes place in the presence of glutamine and ATP through an activated phospho-Asp-tRNA(Asn) or phospho-Glu-tRNA(Gln). The chain is Aspartyl/glutamyl-tRNA(Asn/Gln) amidotransferase subunit B from Salinispora tropica (strain ATCC BAA-916 / DSM 44818 / JCM 13857 / NBRC 105044 / CNB-440).